Consider the following 451-residue polypeptide: UPF0210 protein NMB1652 (451 aa).

The protein belongs to the UPF0210 family. Homodimer.

The protein is UPF0210 protein NMB1652 of Neisseria meningitidis serogroup B (strain ATCC BAA-335 / MC58).